The sequence spans 190 residues: dCTP deaminase (190 aa).

Lys-113–Arg-118 contributes to the dCTP binding site. Glu-139 serves as the catalytic Proton donor/acceptor. 4 residues coordinate dCTP: Gln-158, Tyr-172, Lys-181, and Gln-182.

It belongs to the dCTP deaminase family. Homotrimer.

It carries out the reaction dCTP + H2O + H(+) = dUTP + NH4(+). Its pathway is pyrimidine metabolism; dUMP biosynthesis; dUMP from dCTP (dUTP route): step 1/2. Functionally, catalyzes the deamination of dCTP to dUTP. In Chlamydia caviae (strain ATCC VR-813 / DSM 19441 / 03DC25 / GPIC) (Chlamydophila caviae), this protein is dCTP deaminase.